A 570-amino-acid polypeptide reads, in one-letter code: Methyl-coenzyme M reductase subunit alpha (570 aa).

Position 161 (Q161) interacts with coenzyme F430. Residues R239, 270-271 (KH), and R284 contribute to the coenzyme B site. The residue at position 271 (H271) is a Pros-methylhistidine. Position 285 is a 5-methylarginine (R285). Y346 and F464 together coordinate coenzyme M. G465 is modified (1-thioglycine). D470 is subject to (Z)-2,3-didehydroaspartate. At C472 the chain carries S-methylcysteine.

It belongs to the methyl-coenzyme M reductase alpha subunit family. MCR is a hexamer of two alpha, two beta, and two gamma chains, forming a dimer of heterotrimers. It depends on coenzyme F430 as a cofactor. Post-translationally, the alpha subunit contains five modified amino acids near the active site region. Is methylated on His-271, Arg-285 and Cys-472, probably by the action of specific S-adenosylmethionine-dependent methyltransferases. Also contains a thioglycine at position 465, forming a thiopeptide bond. Contains a didehydroaspartate residue at position 470. The methylation on C5 of Arg-285 is a post-translational methylation not essential in vivo, but which plays a role for the stability and structural integrity of MCR. Does not show a methylation at Gln-420, as shown for M.marburgensis.

Its subcellular location is the cytoplasm. It catalyses the reaction coenzyme B + methyl-coenzyme M = methane + coenzyme M-coenzyme B heterodisulfide. It functions in the pathway one-carbon metabolism; methyl-coenzyme M reduction; methane from methyl-coenzyme M: step 1/1. Component of the methyl-coenzyme M reductase (MCR) I that catalyzes the reductive cleavage of methyl-coenzyme M (CoM-S-CH3 or 2-(methylthio)ethanesulfonate) using coenzyme B (CoB or 7-mercaptoheptanoylthreonine phosphate) as reductant which results in the production of methane and the mixed heterodisulfide of CoB and CoM (CoM-S-S-CoB). This is the final step in methanogenesis. The polypeptide is Methyl-coenzyme M reductase subunit alpha (mcrA) (Methanosarcina barkeri (strain Fusaro / DSM 804)).